Reading from the N-terminus, the 359-residue chain is Peptide chain release factor 1 (359 aa).

Gln235 is subject to N5-methylglutamine. Positions 280–306 are disordered; the sequence is AERQRADSERSADRKSQVGSGDRSERI.

It belongs to the prokaryotic/mitochondrial release factor family. Post-translationally, methylated by PrmC. Methylation increases the termination efficiency of RF1.

The protein resides in the cytoplasm. In terms of biological role, peptide chain release factor 1 directs the termination of translation in response to the peptide chain termination codons UAG and UAA. This chain is Peptide chain release factor 1, found in Rhizobium johnstonii (strain DSM 114642 / LMG 32736 / 3841) (Rhizobium leguminosarum bv. viciae).